The following is an 801-amino-acid chain: Transducin beta-like protein 3 (801 aa).

Ala-2 carries the post-translational modification N-acetylalanine. 13 WD repeats span residues 64-105 (EDQE…RLWK), 107-146 (IHTA…GTHH), 149-190 (GSPG…CLAV), 193-232 (AHYS…TTRT), 245-284 (LPEQ…CVYT), 290-329 (GLRQ…LQKQ), 332-372 (GYSE…CQIL), 374-413 (GHTD…QVAC), 419-459 (GHTH…LAKS), 477-516 (CHDK…LLGV), 519-560 (GHRR…KTFE), 562-602 (HDAS…RTLD), and 604-642 (HEDK…EQAE). Position 257 is a phosphoserine (Ser-257). Lys-407 participates in a covalent cross-link: Glycyl lysine isopeptide (Lys-Gly) (interchain with G-Cter in SUMO2).

Part of the small subunit (SSU) processome, composed of more than 70 proteins and the RNA chaperone small nucleolar RNA (snoRNA) U3.

The protein localises to the nucleus. It is found in the nucleolus. In terms of biological role, part of the small subunit (SSU) processome, first precursor of the small eukaryotic ribosomal subunit. During the assembly of the SSU processome in the nucleolus, many ribosome biogenesis factors, an RNA chaperone and ribosomal proteins associate with the nascent pre-rRNA and work in concert to generate RNA folding, modifications, rearrangements and cleavage as well as targeted degradation of pre-ribosomal RNA by the RNA exosome. This is Transducin beta-like protein 3 (Tbl3) from Mus musculus (Mouse).